The chain runs to 305 residues: Tyrosine recombinase XerC (305 aa).

In terms of domain architecture, Core-binding (CB) spans 2–88 (NQLELYIDTF…TLRSFYRFLE (87 aa)). A Tyr recombinase domain is found at 109–294 (PVPGFLYQEE…TKDHLREAYM (186 aa)). Catalysis depends on residues Arg149, Lys173, His246, Arg249, and His272. The active-site O-(3'-phospho-DNA)-tyrosine intermediate is Tyr281.

Belongs to the 'phage' integrase family. XerC subfamily. Forms a cyclic heterotetrameric complex composed of two molecules of XerC and two molecules of XerD.

It localises to the cytoplasm. Site-specific tyrosine recombinase, which acts by catalyzing the cutting and rejoining of the recombining DNA molecules. The XerC-XerD complex is essential to convert dimers of the bacterial chromosome into monomers to permit their segregation at cell division. It also contributes to the segregational stability of plasmids. The sequence is that of Tyrosine recombinase XerC from Oceanobacillus iheyensis (strain DSM 14371 / CIP 107618 / JCM 11309 / KCTC 3954 / HTE831).